Reading from the N-terminus, the 734-residue chain is DNA-binding protein RFX2 (734 aa).

Polar residues predominate over residues 1–23 (MQRSEGGSETPSTVALRTSTSAQ). Residues 1-31 (MQRSEGGSETPSTVALRTSTSAQAPVVQPVP) are disordered. Residues 204–279 (HLQWLLDNYE…YHYYGIRLKP (76 aa)) constitute a DNA-binding region (RFX-type winged-helix). A disordered region spans residues 694 to 722 (DTSFSDDMTSDGDMSRMSERSLTEPAVKR). Over residues 706-722 (DMSRMSERSLTEPAVKR) the composition is skewed to basic and acidic residues.

Belongs to the RFX family. Homodimer. Heterodimer; heterodimerizes with other rfx proteins.

It is found in the nucleus. The protein resides in the cytoplasm. Functionally, transcription factor that acts as a key regulator of ciliogenesis. Specifically regulates expression of genes required for cilium assembly and function. Recognizes and binds the X-box, a regulatory motif with DNA sequence 5'-GTNRCC(0-3N)RGYAAC-3' present on promoters. The polypeptide is DNA-binding protein RFX2 (rfx2) (Danio rerio (Zebrafish)).